The sequence spans 86 residues: Dolichyl-diphosphooligosaccharide--protein glycosyltransferase subunit OST5 (86 aa).

The Lumenal portion of the chain corresponds to 2–27 (TYEQLYKEFHSSKSFQPFIHLDTQPK). Residues 28–48 (FAICGLIVTLAVLSSALFAVG) form a helical membrane-spanning segment. Topologically, residues 49 to 56 (SKSSYIKK) are cytoplasmic. Residues 57-77 (LFFYTILSVIGSLFAGLTTVF) form a helical membrane-spanning segment. Over 78–86 (ASNSFGVYV) the chain is Lumenal.

It belongs to the OST5 family. As to quaternary structure, component of the oligosaccharyltransferase (OST) complex, which appears to exist in two assemblies comprising OST1, OST2, OST4, OST5, STT3, SWP1, WPB1, and either OST3 or OST6. OST assembly occurs through the formation of 3 subcomplexes. Subcomplex 1 contains OST1 and OST5, subcomplex 2 contains STT3, OST3, and OST4, and subcomplex 3 contains OST2, WBP1, and SWP1.

Its subcellular location is the endoplasmic reticulum membrane. The protein operates within protein modification; protein glycosylation. Its function is as follows. Subunit of the oligosaccharyl transferase (OST) complex that catalyzes the initial transfer of a defined glycan (Glc(3)Man(9)GlcNAc(2) in eukaryotes) from the lipid carrier dolichol-pyrophosphate to an asparagine residue within an Asn-X-Ser/Thr consensus motif in nascent polypeptide chains, the first step in protein N-glycosylation. N-glycosylation occurs cotranslationally and the complex associates with the Sec61 complex at the channel-forming translocon complex that mediates protein translocation across the endoplasmic reticulum (ER). All subunits are required for a maximal enzyme activity. This chain is Dolichyl-diphosphooligosaccharide--protein glycosyltransferase subunit OST5 (OST5), found in Saccharomyces cerevisiae (strain ATCC 204508 / S288c) (Baker's yeast).